Reading from the N-terminus, the 191-residue chain is Fe/S biogenesis protein NfuA (191 aa).

[4Fe-4S] cluster contacts are provided by Cys-149 and Cys-152.

The protein belongs to the NfuA family. In terms of assembly, homodimer. [4Fe-4S] cluster is required as a cofactor.

In terms of biological role, involved in iron-sulfur cluster biogenesis. Binds a 4Fe-4S cluster, can transfer this cluster to apoproteins, and thereby intervenes in the maturation of Fe/S proteins. Could also act as a scaffold/chaperone for damaged Fe/S proteins. This chain is Fe/S biogenesis protein NfuA, found in Erwinia tasmaniensis (strain DSM 17950 / CFBP 7177 / CIP 109463 / NCPPB 4357 / Et1/99).